The following is a 157-amino-acid chain: Endoribonuclease YbeY (157 aa).

Residues H116, H120, and H126 each coordinate Zn(2+).

It belongs to the endoribonuclease YbeY family. It depends on Zn(2+) as a cofactor.

Its subcellular location is the cytoplasm. Single strand-specific metallo-endoribonuclease involved in late-stage 70S ribosome quality control and in maturation of the 3' terminus of the 16S rRNA. The protein is Endoribonuclease YbeY of Arthrobacter sp. (strain FB24).